A 50-amino-acid polypeptide reads, in one-letter code: Putative protein HokF (50 aa).

Residues tyrosine 5–glycine 25 traverse the membrane as a helical segment.

Belongs to the Hok/Gef family.

The protein resides in the cell inner membrane. In terms of biological role, toxic component of a type I toxin-antitoxin (TA) system. When overexpressed kills cells within minutes; causes collapse of the transmembrane potential and arrest of respiration. Its toxic effect is probably neutralized by an antisense antitoxin Sok RNA. This is Putative protein HokF (hokF) from Escherichia coli O157:H7.